We begin with the raw amino-acid sequence, 191 residues long: Glutathione-dependent formaldehyde-activating enzyme (191 aa).

The CENP-V/GFA domain maps to 22–169; sequence FQGGTLECHC…LTELGLPPYD (148 aa). Zn(2+)-binding residues include C29, C31, C50, C52, C55, C97, and C100.

The protein belongs to the Gfa family. The cofactor is Zn(2+).

The enzyme catalyses S-(hydroxymethyl)glutathione = glutathione + formaldehyde. The protein operates within one-carbon metabolism; formaldehyde degradation; formate from formaldehyde (glutathione route): step 1/3. In terms of biological role, catalyzes the condensation of formaldehyde and glutathione to S-hydroxymethylglutathione. The protein is Glutathione-dependent formaldehyde-activating enzyme of Xanthomonas axonopodis pv. citri (strain 306).